The sequence spans 252 residues: NAC domain-containing protein 23 (252 aa).

The region spanning Met12–Lys177 is the NAC domain. Residues Thr110–Pro183 mediate DNA binding. Positions Val225–Gly252 are disordered. Acidic residues predominate over residues Ala229 to Asp244.

In terms of assembly, forms heterodimers with NAC26. In terms of tissue distribution, expressed in stems and panicles. Expressed in developing seeds.

It localises to the nucleus. The protein localises to the cytoplasm. In terms of biological role, transcription factor involved in the regulation of seed size. Possesses transactivation activity in yeast. This chain is NAC domain-containing protein 23, found in Oryza sativa subsp. indica (Rice).